The chain runs to 357 residues: NADH-quinone oxidoreductase subunit H (357 aa).

8 helical membrane passes run 22 to 42, 94 to 114, 130 to 150, 164 to 184, 199 to 219, 254 to 274, 294 to 314, and 333 to 353; these read VAII…LMLV, IYLF…VWAV, LLYV…AGWA, AALL…VVMI, GGII…FFIS, FFLA…IMFF, IPGM…YLWV, and VFLP…QLQL.

Belongs to the complex I subunit 1 family. As to quaternary structure, NDH-1 is composed of 14 different subunits. Subunits NuoA, H, J, K, L, M, N constitute the membrane sector of the complex.

It is found in the cell inner membrane. The catalysed reaction is a quinone + NADH + 5 H(+)(in) = a quinol + NAD(+) + 4 H(+)(out). In terms of biological role, NDH-1 shuttles electrons from NADH, via FMN and iron-sulfur (Fe-S) centers, to quinones in the respiratory chain. The immediate electron acceptor for the enzyme in this species is believed to be ubiquinone. Couples the redox reaction to proton translocation (for every two electrons transferred, four hydrogen ions are translocated across the cytoplasmic membrane), and thus conserves the redox energy in a proton gradient. This subunit may bind ubiquinone. The chain is NADH-quinone oxidoreductase subunit H from Vesicomyosocius okutanii subsp. Calyptogena okutanii (strain HA).